Here is a 548-residue protein sequence, read N- to C-terminus: Formyltransferase/hydrolase complex Fhc subunit A (548 aa).

Zn(2+)-binding residues include His-57, His-59, and His-227.

This sequence belongs to the metallo-dependent hydrolases superfamily. FwdA/FmdA family. In terms of assembly, octaheteromer. Part of the formyltransferase/hydrolase complex fhc; composed of FhcA, FhcB, FhcC and FhcD. Zn(2+) is required as a cofactor.

The protein localises to the cytoplasm. The enzyme catalyses N-formylmethanofuran + H2O = methanofuran + formate. The protein operates within one-carbon metabolism; formaldehyde degradation; formate from formaldehyde (H(4)MPT route): step 4/5. Involved in the transformation of 5-formyl tetrahydromethanopterin (5-formyl-H(4)MPT) to methanofuran (MFR) and formate via the formylmethanofuran (formyl-MFR). May be catalyze the hydrolysis of formylmethanofuran (formyl-MFR) to yield formate and MFR. The protein is Formyltransferase/hydrolase complex Fhc subunit A (fhcA) of Methylorubrum extorquens (strain ATCC 14718 / DSM 1338 / JCM 2805 / NCIMB 9133 / AM1) (Methylobacterium extorquens).